The primary structure comprises 425 residues: MREPDFLNHFLKKGYFKKHAKAVLALSGGLDSMFLFKVLSTYQKELEIELILAHVNHKQRIESDWEEKELRKLAAEAELPIYISNFSGEFSEARARNFRYDFFQEVMKKTGATALVTAHHADDQVETIFMRLIRGTRLRYLSGIKEKQVVGEIEIIRPFLHFQKKDFPSIFHFEDTSNQENHYFRNRIRNSYLPELEKENPRFRDAILGIGNEILDYDLAIAELSNNINVEDLQQLFSYSESTQRVLLQTYLNRFPDLNLTKAQFAEVQQILKFKSQYRHPIKNGYELIKEYQQFQICKISPQADEKEDELVLHYQNQVAYQGYLFSFGLPLEGELIQQIPVSRETSIHIRHRKTGDVLIKNGHRKKLRRLFIDLKIPMEKRNSALIIEQFGEIVSILGIATNNLSKKTKNDIMNTVLYIEKIDR.

27–32 (SGGLDS) lines the ATP pocket.

This sequence belongs to the tRNA(Ile)-lysidine synthase family.

The protein resides in the cytoplasm. The catalysed reaction is cytidine(34) in tRNA(Ile2) + L-lysine + ATP = lysidine(34) in tRNA(Ile2) + AMP + diphosphate + H(+). Functionally, ligates lysine onto the cytidine present at position 34 of the AUA codon-specific tRNA(Ile) that contains the anticodon CAU, in an ATP-dependent manner. Cytidine is converted to lysidine, thus changing the amino acid specificity of the tRNA from methionine to isoleucine. The polypeptide is tRNA(Ile)-lysidine synthase (Streptococcus pneumoniae serotype 2 (strain D39 / NCTC 7466)).